The chain runs to 293 residues: FAS1 domain-containing protein DEHA2G15708g (293 aa).

The first 18 residues, 1–18 (MKLSSILYVSVLAHLVMS), serve as a signal peptide directing secretion. The span at 76–87 (DHIGENEKREAK) shows a compositional bias: basic and acidic residues. Residues 76–126 (DHIGENEKREAKNVYNLQSLKEGLDDENDKREGNVNKPEVSEEGSNKGDKR) form a disordered region. Residues 141 to 290 (QNLLQSILPQ…GYIFVINDVL (150 aa)) enclose the FAS1 domain.

The protein localises to the vacuole. This is FAS1 domain-containing protein DEHA2G15708g from Debaryomyces hansenii (strain ATCC 36239 / CBS 767 / BCRC 21394 / JCM 1990 / NBRC 0083 / IGC 2968) (Yeast).